A 437-amino-acid polypeptide reads, in one-letter code: 2-methylisoborneol synthase (437 aa).

A disordered region spans residues 32–125 (AHDSEATVGG…IPGLYHHPVP (94 aa)). Over residues 59–73 (PPSPAAPPTDVPAPE) the composition is skewed to pro residues. 6 residues coordinate Mg(2+): D194, D195, E199, N342, S346, and E350.

Belongs to the terpene synthase family. 2-methylisoborneol synthase subfamily. The cofactor is Mg(2+).

It carries out the reaction (E)-2-methylgeranyl diphosphate + H2O = 2-methylisoborneol + diphosphate. In terms of biological role, catalyzes the cyclization of 2-methylgeranyl diphosphate (2-MeGPP) to 2-methylisoborneol (2-MIB), which likely involves the intermediacy of 2-methyllinalyl diphosphate. The sequence is that of 2-methylisoborneol synthase from Streptomyces griseus.